We begin with the raw amino-acid sequence, 206 residues long: Transcription elongation factor A protein-like 5 (206 aa).

The segment covering 1-26 (MEKLYKENEGKPENERNLESEGKPED) has biased composition (basic and acidic residues). Residues 1-206 (MEKLYKENEG…QKDLEDVPYV (206 aa)) are disordered. Over residues 27–42 (EGSTEDEGKSDEEEKP) the composition is skewed to acidic residues. The segment covering 43-56 (DMEGKTECEGKRED) has biased composition (basic and acidic residues). The segment covering 57–70 (EGEPGDEGQLEDEG) has biased composition (acidic residues). Basic and acidic residues-rich tracts occupy residues 71–86 (NQEKQGKSEGEDKPQS), 102–113 (AAEKRPAEDYVP), 121–160 (DRGTDDSPKDSQEDLQERHLSSEEMMRECGDVSRAQEELR), and 196–206 (GQKDLEDVPYV).

It belongs to the TFS-II family. TFA subfamily.

The protein resides in the nucleus. May be involved in transcriptional regulation. The polypeptide is Transcription elongation factor A protein-like 5 (TCEAL5) (Homo sapiens (Human)).